Consider the following 345-residue polypeptide: Anthranilate phosphoribosyltransferase (345 aa).

5-phospho-alpha-D-ribose 1-diphosphate contacts are provided by residues Gly79, 82–83 (GD), Thr87, 89–92 (NVST), 106–114 (KHGNRAVSG), and Ser118. Anthranilate is bound at residue Gly79. Ser91 serves as a coordination point for Mg(2+). Residue Asn109 coordinates anthranilate. Residue Arg164 participates in anthranilate binding. Mg(2+) contacts are provided by Asp223 and Glu224.

Belongs to the anthranilate phosphoribosyltransferase family. Homodimer. The cofactor is Mg(2+).

It carries out the reaction N-(5-phospho-beta-D-ribosyl)anthranilate + diphosphate = 5-phospho-alpha-D-ribose 1-diphosphate + anthranilate. Its pathway is amino-acid biosynthesis; L-tryptophan biosynthesis; L-tryptophan from chorismate: step 2/5. Its function is as follows. Catalyzes the transfer of the phosphoribosyl group of 5-phosphorylribose-1-pyrophosphate (PRPP) to anthranilate to yield N-(5'-phosphoribosyl)-anthranilate (PRA). This chain is Anthranilate phosphoribosyltransferase, found in Saccharolobus islandicus (strain M.14.25 / Kamchatka #1) (Sulfolobus islandicus).